The sequence spans 336 residues: F420-dependent glucose-6-phosphate dehydrogenase (336 aa).

A coenzyme F420-(gamma-Glu)n-binding site is contributed by D39. H40 functions as the Proton donor in the catalytic mechanism. Coenzyme F420-(gamma-Glu)n-binding positions include T76 and 107–108 (TG). The active-site Proton acceptor is the E109. Coenzyme F420-(gamma-Glu)n is bound by residues N112, 177–178 (GG), and 180–181 (AV). Positions 195, 198, 259, and 283 each coordinate substrate.

Belongs to the F420-dependent glucose-6-phosphate dehydrogenase family. In terms of assembly, homodimer.

It carries out the reaction oxidized coenzyme F420-(gamma-L-Glu)(n) + D-glucose 6-phosphate + H(+) = 6-phospho-D-glucono-1,5-lactone + reduced coenzyme F420-(gamma-L-Glu)(n). Its function is as follows. Catalyzes the coenzyme F420-dependent oxidation of glucose 6-phosphate (G6P) to 6-phosphogluconolactone. Appears to have a role in resistance to oxidative stress, via its consumption of G6P that serves as a source of reducing power to combat oxidative stress in mycobacteria. More precisely, is likely involved in a F420-dependent anti-oxidant mechanism that protects M.tuberculosis against oxidative stress and bactericidal agents. In terms of biological role, is essential for the bioreductive activation of the bicyclic 4-nitroimidazole prodrug PA-824 (nitroimidazo-oxazine) developed for anti-tuberculosis therapy against both replicating and persistent bacteria. It does not interact directly with PA-824 but, rather, provides reduced F420 to the deazaflavin-dependent nitroreductase Ddn, which in turn activates PA-824. This is F420-dependent glucose-6-phosphate dehydrogenase (fgd1) from Mycobacterium tuberculosis (strain CDC 1551 / Oshkosh).